The following is a 195-amino-acid chain: Putative L(+)-tartrate dehydratase subunit beta (195 aa).

His-36 is an active-site residue. Residue Lys-104 coordinates substrate.

This sequence belongs to the class-I fumarase family. In terms of assembly, heterotetramer of two alpha and two beta subunits.

It carries out the reaction (2R,3R)-tartrate = oxaloacetate + H2O. This Methanocaldococcus jannaschii (strain ATCC 43067 / DSM 2661 / JAL-1 / JCM 10045 / NBRC 100440) (Methanococcus jannaschii) protein is Putative L(+)-tartrate dehydratase subunit beta.